The primary structure comprises 209 residues: ATP-dependent dethiobiotin synthetase BioD (209 aa).

Residue 13 to 18 participates in ATP binding; the sequence is DIGKTV. Threonine 17 is a binding site for Mg(2+). The active site involves lysine 33. Mg(2+) is bound by residues arginine 47 and glutamate 100. ATP is bound by residues 100–103 and 184–186; these read EGAG and PRL.

Belongs to the dethiobiotin synthetase family. As to quaternary structure, homodimer. The cofactor is Mg(2+).

Its subcellular location is the cytoplasm. It catalyses the reaction (7R,8S)-7,8-diammoniononanoate + CO2 + ATP = (4R,5S)-dethiobiotin + ADP + phosphate + 3 H(+). Its pathway is cofactor biosynthesis; biotin biosynthesis; biotin from 7,8-diaminononanoate: step 1/2. Its function is as follows. Catalyzes a mechanistically unusual reaction, the ATP-dependent insertion of CO2 between the N7 and N8 nitrogen atoms of 7,8-diaminopelargonic acid (DAPA, also called 7,8-diammoniononanoate) to form a ureido ring. The polypeptide is ATP-dependent dethiobiotin synthetase BioD (Rhodopseudomonas palustris (strain BisB18)).